Reading from the N-terminus, the 112-residue chain is UPF0145 protein RB3016 (112 aa).

Belongs to the UPF0145 family.

In Rhodopirellula baltica (strain DSM 10527 / NCIMB 13988 / SH1), this protein is UPF0145 protein RB3016.